Consider the following 102-residue polypeptide: Protein PDF (102 aa).

The N-terminal stretch at 1-24 (MARYTYLVALVLLAICCQWGYCGA) is a signal peptide. At Ala100 the chain carries Alanine amide.

The protein belongs to the arthropod PDH family. Predominantly expressed in adult head. Expressed at higher level in males than in females. In adult brain, it is specifically expressed in the ventral lateral neurons (LNvs) as well as in 2-4 tritocerebral cells and 4-6 abdominal cells.

It is found in the secreted. Functionally, neuropeptide PDF is the main transmitter regulating circadian locomotor rhythms. Required to maintain behavioral rhythms under constant conditions by coordinating pacemaker interactions in the circadian system. Together with CCHa1, involved in regulating intensity and periodicity of daytime activity, possibly by modulating rhythmic expression of circadian protein PER/period in a subset of clock neurons, but not TIM/timeless. Acts on small and large ventral lateral neurons to control sleep and regulates the state transition from sleep to wake. This Drosophila melanogaster (Fruit fly) protein is Protein PDF (Pdf).